A 287-amino-acid chain; its full sequence is MSSIQSIQSRIKTVQSIRKITHAMELVSYSKLKKAKTAFDEVEKYNLLIDQTFNKIFENISHDDLKELMKSRNNSKSKLYIIVTSNLGLAGAYNANVIKLVKETVTSDDYLIIIGSYGVRALRQQYNEQIINLSDITTSKRTSTLVSKIIKRAFKYYRNGAVSSINFIYTKFINNLVQEELCEKVFPFDEQMIREHIDRKEIDYKLEFEPSAKDVLADAIPLFVDSKLHLAMATSLISEHSARRSAMENATRNSDSLITELDMEFKRKRQAKITNEIIEIVSGADAV.

This sequence belongs to the ATPase gamma chain family. In terms of assembly, F-type ATPases have 2 components, CF(1) - the catalytic core - and CF(0) - the membrane proton channel. CF(1) has five subunits: alpha(3), beta(3), gamma(1), delta(1), epsilon(1). CF(0) has three main subunits: a, b and c.

Its subcellular location is the cell membrane. Its function is as follows. Produces ATP from ADP in the presence of a proton gradient across the membrane. The gamma chain is believed to be important in regulating ATPase activity and the flow of protons through the CF(0) complex. The sequence is that of ATP synthase gamma chain from Mycoplasmopsis agalactiae (strain NCTC 10123 / CIP 59.7 / PG2) (Mycoplasma agalactiae).